We begin with the raw amino-acid sequence, 394 residues long: Elongation factor Tu (394 aa).

Positions 10–204 (RTHINVGTIG…ILDNYIPEPK (195 aa)) constitute a tr-type G domain. The segment at 19–26 (GHVDHGKT) is G1. Position 19-26 (19-26 (GHVDHGKT)) interacts with GTP. A Mg(2+)-binding site is contributed by threonine 26. Positions 60 to 64 (GITIN) are G2. The segment at 81–84 (DCPG) is G3. Residues 81–85 (DCPGH) and 136–139 (NKCD) contribute to the GTP site. The G4 stretch occupies residues 136–139 (NKCD). The tract at residues 174 to 176 (SAL) is G5.

It belongs to the TRAFAC class translation factor GTPase superfamily. Classic translation factor GTPase family. EF-Tu/EF-1A subfamily. As to quaternary structure, monomer.

Its subcellular location is the cytoplasm. The enzyme catalyses GTP + H2O = GDP + phosphate + H(+). Its function is as follows. GTP hydrolase that promotes the GTP-dependent binding of aminoacyl-tRNA to the A-site of ribosomes during protein biosynthesis. The protein is Elongation factor Tu of Blochmanniella floridana.